We begin with the raw amino-acid sequence, 329 residues long: MARRFLLEFEKPLVELENQIDQIRELARDSEVDVSQQLLQLETLAARRREEIFNALTPAQKIQVARHPQRPSTLDYIQMFCDDWVELHGDRNGTDDQALIGGLARIGEKSVLLIGQQKGRDTKENVARNFGMAKPGGYRKALRLMDHADRFNLPIISFIDTPGAYAGLIAEEQGQGEAIAVNLREMFRLKVPIIATVIGEGGSGGALGIGVADRLLMFEHSVYTVASPEACASILWRDAGKAPEAASALKITGPDLMKLGIVDEVLKEPSGGNNWAPLQAGDTLKNALEKHLSELLALSPDELRNNRYSKFRKMGKYLESQSIESEISV.

One can recognise a CoA carboxyltransferase C-terminal domain in the interval 40–294; that stretch reads QLETLAARRR…KNALEKHLSE (255 aa).

The protein belongs to the AccA family. Acetyl-CoA carboxylase is a heterohexamer composed of biotin carboxyl carrier protein (AccB), biotin carboxylase (AccC) and two subunits each of ACCase subunit alpha (AccA) and ACCase subunit beta (AccD).

It localises to the cytoplasm. It carries out the reaction N(6)-carboxybiotinyl-L-lysyl-[protein] + acetyl-CoA = N(6)-biotinyl-L-lysyl-[protein] + malonyl-CoA. The protein operates within lipid metabolism; malonyl-CoA biosynthesis; malonyl-CoA from acetyl-CoA: step 1/1. Component of the acetyl coenzyme A carboxylase (ACC) complex. First, biotin carboxylase catalyzes the carboxylation of biotin on its carrier protein (BCCP) and then the CO(2) group is transferred by the carboxyltransferase to acetyl-CoA to form malonyl-CoA. This Prochlorococcus marinus (strain NATL2A) protein is Acetyl-coenzyme A carboxylase carboxyl transferase subunit alpha.